A 313-amino-acid chain; its full sequence is MRQTNVALLYEAQRERLALTHVSGQLDRTISVTEDRIWPADLIGHLNLIHPARLQILGAAELSWAQRQSREKIGHHLTEIINARPPAIIVADRCQPPPILCTICENADIALFTTPHPAASVIDQLRLYLSRELSEKISLHGVFMDVLGLGVFITGNSGAGKSELALELISRGHGLVADDIVEFSRIAPTVLEGRCPAMLKDFIEVRGLGILNIRTIFGETACRRKMRLRLVVHLERRLPGQTDPSRLPMHRETQEVLGVPVLRAILPVAAGRNIAVLLEAAVRSTILQLRGIDSTQEFIDRQQRMLEGEPGPD.

Active-site residues include H140 and K161. 155-162 (GNSGAGKS) is an ATP binding site. Residue S162 coordinates Mg(2+). D179 functions as the Proton acceptor; for phosphorylation activity. Proton donor; for dephosphorylation activity in the catalytic mechanism. Residues 203 to 212 (IEVRGLGILN) form an important for the catalytic mechanism of both phosphorylation and dephosphorylation region. E204 contributes to the Mg(2+) binding site. R246 is an active-site residue. Residues 267-272 (PVAAGR) form an important for the catalytic mechanism of dephosphorylation region.

Belongs to the HPrK/P family. As to quaternary structure, homohexamer. It depends on Mg(2+) as a cofactor.

It catalyses the reaction [HPr protein]-L-serine + ATP = [HPr protein]-O-phospho-L-serine + ADP + H(+). It carries out the reaction [HPr protein]-O-phospho-L-serine + phosphate + H(+) = [HPr protein]-L-serine + diphosphate. In terms of biological role, catalyzes the ATP- as well as the pyrophosphate-dependent phosphorylation of a specific serine residue in HPr, a phosphocarrier protein of the phosphoenolpyruvate-dependent sugar phosphotransferase system (PTS). HprK/P also catalyzes the pyrophosphate-producing, inorganic phosphate-dependent dephosphorylation (phosphorolysis) of seryl-phosphorylated HPr (P-Ser-HPr). The sequence is that of HPr kinase/phosphorylase from Aromatoleum aromaticum (strain DSM 19018 / LMG 30748 / EbN1) (Azoarcus sp. (strain EbN1)).